We begin with the raw amino-acid sequence, 638 residues long: Asparagine--tRNA ligase, cytoplasmic 2 (638 aa).

A compositionally biased stretch (basic and acidic residues) spans 1–16; the sequence is MESHGKTHQKEHDNDL. Disordered regions lie at residues 1-23 and 62-87; these read MESH…PITL and VKKN…DQAH.

It belongs to the class-II aminoacyl-tRNA synthetase family.

Its subcellular location is the cytoplasm. The protein resides in the cytosol. It catalyses the reaction tRNA(Asn) + L-asparagine + ATP = L-asparaginyl-tRNA(Asn) + AMP + diphosphate + H(+). In Arabidopsis thaliana (Mouse-ear cress), this protein is Asparagine--tRNA ligase, cytoplasmic 2.